Consider the following 443-residue polypeptide: Nuclear pore complex-interacting protein family member B15 (443 aa).

The signal sequence occupies residues 1-18; the sequence is MRLRFWLLIWLLLGFISH. N-linked (GlcNAc...) asparagine glycosylation occurs at Asn111. Disordered stretches follow at residues 242 to 262 and 330 to 413; these read RMGR…NSLS and SPLP…TRHC. Polar residues predominate over residues 252–262; that stretch reads QQHSITDNSLS. Residues 351–393 show a composition bias toward basic and acidic residues; the sequence is EAEKPPKPKRWRVDEVEQSPKPKRRRADEVEQSPKPKRQREAE. Over residues 399–412 the composition is skewed to basic residues; sequence KPKRRRLSKLRTRH.

Belongs to the NPIP family.

The protein localises to the secreted. The protein is Nuclear pore complex-interacting protein family member B15 (NPIPB15) of Homo sapiens (Human).